The chain runs to 104 residues: Holotricin-3 (104 aa).

The N-terminal stretch at 1–20 (MNKLIILGLACIIAVASAMP) is a signal peptide. The segment at 22-104 (GPGDGHGGGH…HHGGYQTHGY (83 aa)) is disordered. Over residues 23 to 97 (PGDGHGGGHG…PGGHGGGHHG (75 aa)) the composition is skewed to gly residues. 18 repeat units span residues 27 to 30 (HGGG), 31 to 34 (HGGG), 35 to 38 (HGGG), 39 to 42 (HGNG), 43 to 46 (QGGG), 47 to 50 (HGHG), 51 to 54 (PGGG), 55 to 58 (FGGG), 59 to 62 (HGGG), 63 to 66 (HGGG), 67 to 70 (GRGG), 71 to 74 (GGSG), 75 to 78 (GGGS), 79 to 82 (PGHG), 83 to 86 (AGGG), 87 to 90 (YPGG), 91 to 94 (HGGG), and 96 to 98 (HGG). The 18 X 4 AA approximate tandem repeats of H-G-G-G stretch occupies residues 27–98 (HGGGHGGGHG…GGHGGGHHGG (72 aa)).

The protein to T.molitor tenecin 3.

It is found in the secreted. Functionally, has antifungal activity against C.albicans. This is Holotricin-3 from Holotrichia diomphalia (Korean black chafer).